A 358-amino-acid polypeptide reads, in one-letter code: Histidinol-phosphate aminotransferase (358 aa).

At K218 the chain carries N6-(pyridoxal phosphate)lysine.

The protein belongs to the class-II pyridoxal-phosphate-dependent aminotransferase family. Histidinol-phosphate aminotransferase subfamily. In terms of assembly, homodimer. Requires pyridoxal 5'-phosphate as cofactor.

It carries out the reaction L-histidinol phosphate + 2-oxoglutarate = 3-(imidazol-4-yl)-2-oxopropyl phosphate + L-glutamate. It functions in the pathway amino-acid biosynthesis; L-histidine biosynthesis; L-histidine from 5-phospho-alpha-D-ribose 1-diphosphate: step 7/9. The sequence is that of Histidinol-phosphate aminotransferase from Dehalococcoides mccartyi (strain ATCC BAA-2100 / JCM 16839 / KCTC 5957 / BAV1).